The sequence spans 349 residues: Nucleoporin SEH1 (349 aa).

5 WD repeats span residues 7–46, 53–94, 106–147, 153–192, and 210–253; these read GHDD…SNWE, AHDS…EECS, DSKG…DLRS, EMKV…EQAI, and GHKS…SPLA. Ser257 is subject to Phosphoserine. A disordered region spans residues 263–285; sequence MFDNSADVDMDAQGRSDSNTEEK. Basic and acidic residues predominate over residues 274-285; the sequence is AQGRSDSNTEEK. The WD 6 repeat unit spans residues 302-341; it reads DHNGEVWSVSWNLTGTILSSAGDDGKVRLWKATYSNEFKC.

The protein belongs to the WD repeat SEC13 family. Component of the nuclear pore complex (NPC). NPC constitutes the exclusive means of nucleocytoplasmic transport. NPCs allow the passive diffusion of ions and small molecules and the active, nuclear transport receptor-mediated bidirectional transport of macromolecules such as proteins, RNAs, ribonucleoparticles (RNPs), and ribosomal subunits across the nuclear envelope. Due to its 8-fold rotational symmetry, all subunits are present with 8 copies or multiples thereof. SEH1 is part of the heptameric 0.5 MDa autoassembling NUP84 NPC subcomplex (NUP84, NUP85, NUP120, NUP133, NUP145C, SEC13 and SEH1). Component of the SEA complex composed of at least IML1/SEA1, RTC1/SEA2, MTC5/SEA3, NPR2, NPR3, SEA4, SEC13 and SEH1.

Its subcellular location is the nucleus. The protein localises to the nuclear pore complex. It localises to the nucleus membrane. It is found in the vacuole membrane. In terms of biological role, functions as a component of the nuclear pore complex (NPC). NPC components, collectively referred to as nucleoporins (NUPs), can play the role of both NPC structural components and of docking or interaction partners for transiently associated nuclear transport factors. Involved in nuclear poly(A)+ RNA export and NPC biogenesis. It is also required for normal nuclear morphology. Component of the SEA complex which coats the vacuolar membrane and is involved in intracellular trafficking, autophagy, response to nitrogen starvation, and amino acid biogenesis. This is Nucleoporin SEH1 (SEH1) from Saccharomyces cerevisiae (strain ATCC 204508 / S288c) (Baker's yeast).